Consider the following 167-residue polypeptide: Transcriptional repressor NrdR (167 aa).

A zinc finger spans residues 3–34 (CPFCRNPDSRVVDSRMADDGSAIRRRRQCPEC). The ATP-cone domain maps to 46-136 (LSVIKRSGVG…VYQAFESLED (91 aa)). Positions 148–167 (AQEDAAERPATPRKPEKTSL) are disordered.

It belongs to the NrdR family. Zn(2+) is required as a cofactor.

Negatively regulates transcription of bacterial ribonucleotide reductase nrd genes and operons by binding to NrdR-boxes. The sequence is that of Transcriptional repressor NrdR from Pseudarthrobacter chlorophenolicus (strain ATCC 700700 / DSM 12829 / CIP 107037 / JCM 12360 / KCTC 9906 / NCIMB 13794 / A6) (Arthrobacter chlorophenolicus).